Reading from the N-terminus, the 590-residue chain is Aspartate--tRNA(Asp/Asn) ligase (590 aa).

Glu175 serves as a coordination point for L-aspartate. The segment at 199-202 (QQYK) is aspartate. L-aspartate contacts are provided by Arg221 and His450. 221 to 223 (RDE) is an ATP binding site. Glu484 contacts ATP. L-aspartate is bound at residue Arg491. Residue 536-539 (GVDR) participates in ATP binding.

The protein belongs to the class-II aminoacyl-tRNA synthetase family. Type 1 subfamily. Homodimer.

The protein localises to the cytoplasm. It carries out the reaction tRNA(Asx) + L-aspartate + ATP = L-aspartyl-tRNA(Asx) + AMP + diphosphate. Aspartyl-tRNA synthetase with relaxed tRNA specificity since it is able to aspartylate not only its cognate tRNA(Asp) but also tRNA(Asn). Reaction proceeds in two steps: L-aspartate is first activated by ATP to form Asp-AMP and then transferred to the acceptor end of tRNA(Asp/Asn). In Rhodopseudomonas palustris (strain BisA53), this protein is Aspartate--tRNA(Asp/Asn) ligase.